A 93-amino-acid chain; its full sequence is Acylphosphatase (93 aa).

Positions 6–93 constitute an Acylphosphatase-like domain; the sequence is RARIVVSGRV…GDLGAFEIRF (88 aa). Catalysis depends on residues Arg-21 and Asn-39.

The protein belongs to the acylphosphatase family.

The enzyme catalyses an acyl phosphate + H2O = a carboxylate + phosphate + H(+). In Anaeromyxobacter dehalogenans (strain 2CP-C), this protein is Acylphosphatase (acyP).